A 122-amino-acid chain; its full sequence is NADH-quinone oxidoreductase subunit A (122 aa).

The next 3 membrane-spanning stretches (helical) occupy residues 10 to 30 (MIVG…LTLG), 66 to 86 (IFAL…PWAV), and 91 to 111 (LGLF…IGLA).

The protein belongs to the complex I subunit 3 family. In terms of assembly, NDH-1 is composed of 14 different subunits. Subunits NuoA, H, J, K, L, M, N constitute the membrane sector of the complex.

Its subcellular location is the cell membrane. The enzyme catalyses a quinone + NADH + 5 H(+)(in) = a quinol + NAD(+) + 4 H(+)(out). Its function is as follows. NDH-1 shuttles electrons from NADH, via FMN and iron-sulfur (Fe-S) centers, to quinones in the respiratory chain. The immediate electron acceptor for the enzyme in this species is believed to be a menaquinone. Couples the redox reaction to proton translocation (for every two electrons transferred, four hydrogen ions are translocated across the cytoplasmic membrane), and thus conserves the redox energy in a proton gradient. This chain is NADH-quinone oxidoreductase subunit A, found in Bacillus cytotoxicus (strain DSM 22905 / CIP 110041 / 391-98 / NVH 391-98).